The primary structure comprises 314 residues: Ferrochelatase (314 aa).

H184 and E259 together coordinate Fe cation.

The protein belongs to the ferrochelatase family.

The protein resides in the cytoplasm. The catalysed reaction is heme b + 2 H(+) = protoporphyrin IX + Fe(2+). It participates in porphyrin-containing compound metabolism; protoheme biosynthesis; protoheme from protoporphyrin-IX: step 1/1. Catalyzes the ferrous insertion into protoporphyrin IX. This Chlamydia trachomatis serovar D (strain ATCC VR-885 / DSM 19411 / UW-3/Cx) protein is Ferrochelatase.